The following is a 473-amino-acid chain: Cholesterol 22-monohydroxylase CYP90B52 (473 aa).

Residues 2–22 (EGLLLLLPTAIIALYLYISLI) traverse the membrane as a helical segment. Position 422 (cysteine 422) interacts with heme.

It belongs to the cytochrome P450 family. As to expression, mainly expressed in leaves and roots and, at low levels, in fruits and stems.

Its subcellular location is the membrane. It carries out the reaction cholesterol + reduced [NADPH--hemoprotein reductase] + O2 = (22S)-22-hydroxycholesterol + oxidized [NADPH--hemoprotein reductase] + H2O + H(+). It functions in the pathway steroid metabolism; cholesterol metabolism. Functionally, canonical brassinosteroid (BR)-biosynthetic enzyme capable of converting cholesterol to 22S-hydroxycholesterol via sterol-C22 hydroxylation. This Paris polyphylla (Daiswa polyphylla) protein is Cholesterol 22-monohydroxylase CYP90B52.